Reading from the N-terminus, the 95-residue chain is Aspartyl/glutamyl-tRNA(Asn/Gln) amidotransferase subunit C (95 aa).

It belongs to the GatC family. As to quaternary structure, heterotrimer of A, B and C subunits.

It carries out the reaction L-glutamyl-tRNA(Gln) + L-glutamine + ATP + H2O = L-glutaminyl-tRNA(Gln) + L-glutamate + ADP + phosphate + H(+). It catalyses the reaction L-aspartyl-tRNA(Asn) + L-glutamine + ATP + H2O = L-asparaginyl-tRNA(Asn) + L-glutamate + ADP + phosphate + 2 H(+). Its function is as follows. Allows the formation of correctly charged Asn-tRNA(Asn) or Gln-tRNA(Gln) through the transamidation of misacylated Asp-tRNA(Asn) or Glu-tRNA(Gln) in organisms which lack either or both of asparaginyl-tRNA or glutaminyl-tRNA synthetases. The reaction takes place in the presence of glutamine and ATP through an activated phospho-Asp-tRNA(Asn) or phospho-Glu-tRNA(Gln). The sequence is that of Aspartyl/glutamyl-tRNA(Asn/Gln) amidotransferase subunit C from Geobacter sp. (strain M21).